We begin with the raw amino-acid sequence, 262 residues long: Small ribosomal subunit protein eS1y (262 aa).

Residues 1–18 (MAVGKNKRISKGRKGGKK) are compositionally biased toward basic residues. The tract at residues 1–21 (MAVGKNKRISKGRKGGKKKAV) is disordered.

It belongs to the eukaryotic ribosomal protein eS1 family. In terms of assembly, component of the small ribosomal subunit. Mature ribosomes consist of a small (40S) and a large (60S) subunit. The 40S subunit contains about 33 different proteins and 1 molecule of RNA (18S). The 60S subunit contains about 49 different proteins and 3 molecules of RNA (25S, 5.8S and 5S).

It localises to the cytoplasm. This chain is Small ribosomal subunit protein eS1y, found in Arabidopsis thaliana (Mouse-ear cress).